Reading from the N-terminus, the 848-residue chain is Heat shock protein 70 homolog lhs1 (848 aa).

Residues 1–21 (MKRSVLTIILFFSCQFWHAFA) form the signal peptide. N134, N247, N359, N457, N462, N488, N555, N632, N678, N733, and N817 each carry an N-linked (GlcNAc...) asparagine glycan. The disordered stretch occupies residues 784 to 848 (KLKAKKGASS…QQEIDDSDEL (65 aa)). Composition is skewed to polar residues over residues 807–822 (TNDI…TSTQ) and 829–840 (ASVTQRPSSLQQ). The short motif at 845–848 (SDEL) is the Prevents secretion from ER element.

This sequence belongs to the heat shock protein 70 family.

The protein resides in the endoplasmic reticulum lumen. It carries out the reaction ATP + H2O = ADP + phosphate + H(+). Chaperone required for protein translocation and folding in the endoplasmic reticulum. This chain is Heat shock protein 70 homolog lhs1, found in Schizosaccharomyces pombe (strain 972 / ATCC 24843) (Fission yeast).